The sequence spans 395 residues: MWGLCKNHFPSNKIQVQERNKALKPKKSGSEHKTKQLFPVFNCKKKEKGVMIRFAILRNANTSLLSARSICLFTQAPTYCHVRLNTLNKSITTKRNSLTESKRHVHDGKHFFTTPHQQQQTKLGEIEEGHSPNIKGEDLRSIGQAITHQRNKRRKQIWSAIFGGIFGVILGYSLIYRVIYLKEQSFLPLFPSSKIRKLSTRDLKKVDVNQVQKLSKLRVLEILSGHDMIKEQYGVPLLDKDGNSPTLNEFSMWCEDQDPCVTGIVMEPDDKRDSSHTWYRIPFVCKWRITHRPISIRGTIDDLLNRIGLETSDLFEIISPERVYGSFKYEYPLQGDSHALHLWFHGEIELDDDSLIVYNGKYHVDVKLQEIDLFRREKNGQLIQYVLYKNEAGDK.

A helical transmembrane segment spans residues 156–176; the sequence is QIWSAIFGGIFGVILGYSLIY.

It belongs to the AIM39 family.

The protein resides in the mitochondrion membrane. The sequence is that of Altered inheritance of mitochondria protein 39, mitochondrial (AIM39) from Saccharomyces cerevisiae (strain RM11-1a) (Baker's yeast).